A 368-amino-acid polypeptide reads, in one-letter code: Putative J domain-containing protein R445 (368 aa).

The J domain occupies Asp-13–Leu-83.

This chain is Putative J domain-containing protein R445, found in Acanthamoeba polyphaga mimivirus (APMV).